A 285-amino-acid chain; its full sequence is Hydroxyethylthiazole kinase 1 (285 aa).

Methionine 48 is a binding site for substrate. Positions 124 and 183 each coordinate ATP. Glycine 210 contributes to the substrate binding site.

It belongs to the Thz kinase family. Requires Mg(2+) as cofactor.

The enzyme catalyses 5-(2-hydroxyethyl)-4-methylthiazole + ATP = 4-methyl-5-(2-phosphooxyethyl)-thiazole + ADP + H(+). It participates in cofactor biosynthesis; thiamine diphosphate biosynthesis; 4-methyl-5-(2-phosphoethyl)-thiazole from 5-(2-hydroxyethyl)-4-methylthiazole: step 1/1. In terms of biological role, catalyzes the phosphorylation of the hydroxyl group of 4-methyl-5-beta-hydroxyethylthiazole (THZ). In Methanosphaera stadtmanae (strain ATCC 43021 / DSM 3091 / JCM 11832 / MCB-3), this protein is Hydroxyethylthiazole kinase 1.